We begin with the raw amino-acid sequence, 209 residues long: FMN-dependent NADH:quinone oxidoreductase (209 aa).

FMN is bound by residues Ser-10, 16–18 (SHS), and 98–101 (MWNF).

It belongs to the azoreductase type 1 family. As to quaternary structure, homodimer. It depends on FMN as a cofactor.

It carries out the reaction 2 a quinone + NADH + H(+) = 2 a 1,4-benzosemiquinone + NAD(+). The enzyme catalyses N,N-dimethyl-1,4-phenylenediamine + anthranilate + 2 NAD(+) = 2-(4-dimethylaminophenyl)diazenylbenzoate + 2 NADH + 2 H(+). Quinone reductase that provides resistance to thiol-specific stress caused by electrophilic quinones. Functionally, also exhibits azoreductase activity. Catalyzes the reductive cleavage of the azo bond in aromatic azo compounds to the corresponding amines. The chain is FMN-dependent NADH:quinone oxidoreductase from Nitratidesulfovibrio vulgaris (strain ATCC 29579 / DSM 644 / CCUG 34227 / NCIMB 8303 / VKM B-1760 / Hildenborough) (Desulfovibrio vulgaris).